The sequence spans 450 residues: Zinc finger protein 446 (450 aa).

The SCAN box domain maps to 26–108 (RLRFRGFCYQ…ALVEGLQHDP (83 aa)). K130 is covalently cross-linked (Glycyl lysine isopeptide (Lys-Gly) (interchain with G-Cter in SUMO2)). 2 disordered regions span residues 130–155 (KTEEPLGSPHPSGTVESPGEGPQDTR) and 168–205 (EEPNVDGQEVAPSSPPLAAQSPEGNHGHQEPASTSFHP). At S137 the chain carries Phosphoserine. One can recognise a KRAB domain in the interval 208–254 (IQEEWGLLDRSQKELYWDAMLEKYGTVVSLGLPPHQPEAQAQSELGM). Residue S218 is modified to Phosphoserine. Disordered regions lie at residues 263–331 (RSLR…PRKP) and 354–389 (HTSGPGVQSPGLATGESTEKPPQGEVAFPHHPRRSL). A compositionally biased stretch (pro residues) spans 275–286 (PGCPEAQPPQGP). Residues 287–306 (GPAAWEGLSGAATPAPTVRP) show a composition bias toward low complexity. T308 is modified (phosphothreonine). K330 is covalently cross-linked (Glycyl lysine isopeptide (Lys-Gly) (interchain with G-Cter in SUMO2)). C2H2-type zinc fingers lie at residues 332 to 359 (YTCEQCGRGFDWKSVFVIHHRTHTSGPG), 395 to 422 (YPCEECGCSFSWKSQLVIHRKSHTGQRR), and 423 to 450 (HFCSDCGRAFDWKSQLVIHRKGHRPEVP).

The protein belongs to the krueppel C2H2-type zinc-finger protein family.

It localises to the nucleus. May be involved in transcriptional regulation. This is Zinc finger protein 446 (ZNF446) from Homo sapiens (Human).